Consider the following 118-residue polypeptide: UPF0342 protein LCK_01004 (118 aa).

Belongs to the UPF0342 family.

The protein is UPF0342 protein LCK_01004 of Leuconostoc citreum (strain KM20).